Here is a 137-residue protein sequence, read N- to C-terminus: Probable disulfide formation protein C (137 aa).

A helical membrane pass occupies residues 6–25 (ENLMLGSWLTALTAMLGSLY). Residues Cys-35 and Cys-38 are joined by a disulfide bond. Helical transmembrane passes span 40 to 59 (YQRI…YLKR) and 66 to 83 (YSLW…YHYS). A disulfide bridge links Cys-97 with Cys-102. Residues 111–133 (GFVTIPFLAFTAFVIIFICSLLI) traverse the membrane as a helical segment.

This sequence belongs to the DsbB family. BdbC subfamily.

It localises to the cell membrane. Its function is as follows. Required for disulfide bond formation in some proteins. This is Probable disulfide formation protein C from Halalkalibacterium halodurans (strain ATCC BAA-125 / DSM 18197 / FERM 7344 / JCM 9153 / C-125) (Bacillus halodurans).